A 149-amino-acid polypeptide reads, in one-letter code: Calmodulin, striated muscle (149 aa).

EF-hand domains lie at glutamate 8–asparagine 43, proline 44–aspartate 79, aspartate 81–lysine 116, and leucine 117–lysine 149. Ca(2+) contacts are provided by aspartate 21, aspartate 23, aspartate 25, cysteine 27, glutamate 32, aspartate 57, aspartate 59, serine 61, threonine 63, glutamate 68, aspartate 94, aspartate 96, asparagine 98, tyrosine 100, and glutamate 105. Lysine 116 bears the N6,N6,N6-trimethyllysine mark. Positions 130, 132, 134, 136, and 141 each coordinate Ca(2+).

The protein belongs to the calmodulin family.

The polypeptide is Calmodulin, striated muscle (CCM1) (Gallus gallus (Chicken)).